The following is a 1112-amino-acid chain: Zinc finger protein 654 (1112 aa).

The tract at residues 482 to 514 (PSSSLKKRVDQQSVEEDQSTGETDPDDASVVQP) is disordered. A compositionally biased stretch (acidic residues) spans 494-508 (SVEEDQSTGETDPDD). C2H2-type zinc fingers lie at residues 566–588 (FACV…LKNH), 738–763 (FKCP…RTVH), 779–801 (GKCK…LNRH), 807–831 (YFCL…TKSH), and 836–860 (AQCS…EAQH). Disordered stretches follow at residues 885 to 906 (FSNE…KYST) and 997 to 1018 (VESQ…NLTS). Polar residues-rich tracts occupy residues 886 to 899 (SNEN…VSTS) and 1002 to 1018 (HSAL…NLTS). S1107 and S1111 each carry phosphoserine.

It belongs to the krueppel C2H2-type zinc-finger protein family.

Its subcellular location is the nucleus. In terms of biological role, may be involved in transcriptional regulation. This Mus musculus (Mouse) protein is Zinc finger protein 654.